Here is a 520-residue protein sequence, read N- to C-terminus: Dynein axonemal assembly factor 8 (520 aa).

4 disordered regions span residues 93 to 202, 217 to 256, 328 to 366, and 388 to 520; these read PVLV…LRQE, RDACGPTSSDKGGVKEAPCHAAESAPRSKMPLVEPPEGPP, CARKVPADTPQDTKEADSGSRCASRKQGSQAGPGPQLAQ, and DHLS…LEQL. Over residues 111–125 the composition is skewed to basic and acidic residues; the sequence is RTKDASSQEGRDPGR. Serine 161 bears the Phosphoserine mark. Serine 351 is modified (phosphoserine). The segment covering 401-410 has biased composition (acidic residues); sequence DSEEEEEEEM. The span at 420-437 shows a compositional bias: polar residues; the sequence is SPSSLGLRTCTGKSQLLQ.

In terms of tissue distribution, expressed in respiratory ciliated cells (at protein level).

The protein localises to the dynein axonemal particle. It is found in the cytoplasm. In terms of biological role, in cyliated cells, dynein axonemal particle-specific protein required for deployment of ODA to the axoneme. Interacts with outer dynein arm (ODA) subunits. In Homo sapiens (Human), this protein is Dynein axonemal assembly factor 8.